The following is a 507-amino-acid chain: Glycerol kinase 1 (507 aa).

ADP is bound at residue Thr12. The ATP site is built by Thr12, Thr13, and Ser14. Sn-glycerol 3-phosphate is bound at residue Thr12. Arg16 serves as a coordination point for ADP. Sn-glycerol 3-phosphate contacts are provided by Arg82, Glu83, Tyr134, and Asp249. Glycerol-binding residues include Arg82, Glu83, Tyr134, Asp249, and Gln250. ADP-binding residues include Thr271 and Gly315. The ATP site is built by Thr271, Gly315, Gln319, and Gly416. ADP contacts are provided by Gly416 and Asn420.

It belongs to the FGGY kinase family.

It catalyses the reaction glycerol + ATP = sn-glycerol 3-phosphate + ADP + H(+). It functions in the pathway polyol metabolism; glycerol degradation via glycerol kinase pathway; sn-glycerol 3-phosphate from glycerol: step 1/1. With respect to regulation, inhibited by fructose 1,6-bisphosphate (FBP). Functionally, key enzyme in the regulation of glycerol uptake and metabolism. Catalyzes the phosphorylation of glycerol to yield sn-glycerol 3-phosphate. The protein is Glycerol kinase 1 of Streptomyces coelicolor (strain ATCC BAA-471 / A3(2) / M145).